The chain runs to 497 residues: Lysine--tRNA ligase (497 aa).

Mg(2+) contacts are provided by glutamate 409 and glutamate 416.

It belongs to the class-II aminoacyl-tRNA synthetase family. In terms of assembly, homodimer. Mg(2+) is required as a cofactor.

The protein resides in the cytoplasm. The catalysed reaction is tRNA(Lys) + L-lysine + ATP = L-lysyl-tRNA(Lys) + AMP + diphosphate. This chain is Lysine--tRNA ligase, found in Streptococcus pyogenes serotype M3 (strain ATCC BAA-595 / MGAS315).